A 94-amino-acid chain; its full sequence is Co-chaperonin GroES (94 aa).

Belongs to the GroES chaperonin family. Heptamer of 7 subunits arranged in a ring. Interacts with the chaperonin GroEL.

It localises to the cytoplasm. Together with the chaperonin GroEL, plays an essential role in assisting protein folding. The GroEL-GroES system forms a nano-cage that allows encapsulation of the non-native substrate proteins and provides a physical environment optimized to promote and accelerate protein folding. GroES binds to the apical surface of the GroEL ring, thereby capping the opening of the GroEL channel. The protein is Co-chaperonin GroES of Acetivibrio thermocellus (strain ATCC 27405 / DSM 1237 / JCM 9322 / NBRC 103400 / NCIMB 10682 / NRRL B-4536 / VPI 7372) (Clostridium thermocellum).